Reading from the N-terminus, the 601-residue chain is Sulfite reductase [NADPH] flavoprotein alpha-component (601 aa).

A Flavodoxin-like domain is found at 65–203 (ITIISASQTG…NYNKWSQDLL (139 aa)). FMN contacts are provided by residues 71–76 (SQTGNA), 118–121 (STQG), and 154–163 (LGDTSYNLFC). The FAD-binding FR-type domain maps to 236 to 450 (KNPAEGIILT…IQTNDNFRLP (215 aa)). FAD is bound by residues threonine 324, isoleucine 358, 388–391 (RLYS), 406–408 (TVG), and 421–424 (GGAS). NADP(+) is bound by residues 521–522 (SQ), 527–531 (KIYVQ), and aspartate 563. Tyrosine 601 contacts FAD.

This sequence belongs to the NADPH-dependent sulphite reductase flavoprotein subunit CysJ family. In the N-terminal section; belongs to the flavodoxin family. It in the C-terminal section; belongs to the flavoprotein pyridine nucleotide cytochrome reductase family. Alpha(8)-beta(8). The alpha component is a flavoprotein, the beta component is a hemoprotein. It depends on FAD as a cofactor. The cofactor is FMN.

It carries out the reaction hydrogen sulfide + 3 NADP(+) + 3 H2O = sulfite + 3 NADPH + 4 H(+). It participates in sulfur metabolism; hydrogen sulfide biosynthesis; hydrogen sulfide from sulfite (NADPH route): step 1/1. Its function is as follows. Component of the sulfite reductase complex that catalyzes the 6-electron reduction of sulfite to sulfide. This is one of several activities required for the biosynthesis of L-cysteine from sulfate. The flavoprotein component catalyzes the electron flow from NADPH -&gt; FAD -&gt; FMN to the hemoprotein component. This is Sulfite reductase [NADPH] flavoprotein alpha-component from Buchnera aphidicola subsp. Acyrthosiphon pisum (strain APS) (Acyrthosiphon pisum symbiotic bacterium).